We begin with the raw amino-acid sequence, 214 residues long: Pyrrolidone-carboxylate peptidase (214 aa).

Catalysis depends on residues E80, C143, and H166.

This sequence belongs to the peptidase C15 family. As to quaternary structure, homotetramer.

The protein resides in the cytoplasm. It catalyses the reaction Release of an N-terminal pyroglutamyl group from a polypeptide, the second amino acid generally not being Pro.. Its function is as follows. Removes 5-oxoproline from various penultimate amino acid residues except L-proline. This chain is Pyrrolidone-carboxylate peptidase, found in Klebsiella pneumoniae (strain 342).